A 363-amino-acid polypeptide reads, in one-letter code: 3-isopropylmalate dehydrogenase (363 aa).

78–89 (GPKWGTGAVRPE) lines the NAD(+) pocket. Substrate contacts are provided by Arg96, Arg106, Arg135, and Asp224. Mg(2+) is bound by residues Asp224, Asp249, and Asp253. NAD(+) is bound at residue 288–299 (GSAPDLPANKVN).

The protein belongs to the isocitrate and isopropylmalate dehydrogenases family. In terms of assembly, homodimer. Requires Mg(2+) as cofactor. Mn(2+) is required as a cofactor.

Its subcellular location is the cytoplasm. The enzyme catalyses (2R,3S)-3-isopropylmalate + NAD(+) = 4-methyl-2-oxopentanoate + CO2 + NADH. Its pathway is amino-acid biosynthesis; L-leucine biosynthesis; L-leucine from 3-methyl-2-oxobutanoate: step 3/4. Its function is as follows. Catalyzes the oxidation of 3-carboxy-2-hydroxy-4-methylpentanoate (3-isopropylmalate) to 3-carboxy-4-methyl-2-oxopentanoate. The product decarboxylates to 4-methyl-2 oxopentanoate. This chain is 3-isopropylmalate dehydrogenase (LEU2), found in Cyberlindnera jadinii (Torula yeast).